Reading from the N-terminus, the 261-residue chain is Hemin import ATP-binding protein HmuV (261 aa).

The ABC transporter domain occupies 7–243 (LRGQNLSLQF…EIIDAVYGYK (237 aa)). 39–46 (GPNGAGKS) is an ATP binding site.

Belongs to the ABC transporter superfamily. Heme (hemin) importer (TC 3.A.1.14.5) family. In terms of assembly, the complex is composed of two ATP-binding proteins (HmuV), two transmembrane proteins (HmuU) and a solute-binding protein (HmuT).

Its subcellular location is the cell inner membrane. Part of the ABC transporter complex HmuTUV involved in hemin import. Responsible for energy coupling to the transport system. The chain is Hemin import ATP-binding protein HmuV from Vibrio vulnificus (strain YJ016).